Reading from the N-terminus, the 73-residue chain is Small ribosomal subunit protein bS18 (73 aa).

Belongs to the bacterial ribosomal protein bS18 family. Part of the 30S ribosomal subunit. Forms a tight heterodimer with protein bS6.

Functionally, binds as a heterodimer with protein bS6 to the central domain of the 16S rRNA, where it helps stabilize the platform of the 30S subunit. In Synechococcus sp. (strain WH7803), this protein is Small ribosomal subunit protein bS18.